A 189-amino-acid chain; its full sequence is Peptidyl-tRNA hydrolase (189 aa).

Residue phenylalanine 15 participates in tRNA binding. The active-site Proton acceptor is histidine 20. TRNA-binding residues include tyrosine 65, asparagine 67, and asparagine 113.

Belongs to the PTH family. In terms of assembly, monomer.

Its subcellular location is the cytoplasm. The catalysed reaction is an N-acyl-L-alpha-aminoacyl-tRNA + H2O = an N-acyl-L-amino acid + a tRNA + H(+). In terms of biological role, hydrolyzes ribosome-free peptidyl-tRNAs (with 1 or more amino acids incorporated), which drop off the ribosome during protein synthesis, or as a result of ribosome stalling. Functionally, catalyzes the release of premature peptidyl moieties from peptidyl-tRNA molecules trapped in stalled 50S ribosomal subunits, and thus maintains levels of free tRNAs and 50S ribosomes. This chain is Peptidyl-tRNA hydrolase, found in Phytoplasma australiense.